The primary structure comprises 491 residues: Probable malate:quinone oxidoreductase (491 aa).

The protein belongs to the MQO family. Requires FAD as cofactor.

The enzyme catalyses (S)-malate + a quinone = a quinol + oxaloacetate. It participates in carbohydrate metabolism; tricarboxylic acid cycle; oxaloacetate from (S)-malate (quinone route): step 1/1. The protein is Probable malate:quinone oxidoreductase of Actinobacillus pleuropneumoniae serotype 5b (strain L20).